The following is a 101-amino-acid chain: DNA-binding protein HU (101 aa).

This sequence belongs to the bacterial histone-like protein family. As to quaternary structure, homodimer.

Its function is as follows. Histone-like DNA-binding protein which is capable of wrapping DNA to stabilize it, and thus to prevent its denaturation under extreme environmental conditions. This is DNA-binding protein HU (hup) from Rickettsia bellii (strain RML369-C).